The primary structure comprises 51 residues: Large ribosomal subunit protein eL39 (51 aa).

It belongs to the eukaryotic ribosomal protein eL39 family.

The polypeptide is Large ribosomal subunit protein eL39 (Methanobrevibacter smithii (strain ATCC 35061 / DSM 861 / OCM 144 / PS)).